We begin with the raw amino-acid sequence, 387 residues long: Dual specificity mitogen-activated protein kinase kinase mek-2 (387 aa).

The interval 1-37 (MSSGKRRNPLGLSLPPTVNEQSESGEATAEEATATVP) is disordered. Over residues 16–25 (PTVNEQSESG) the composition is skewed to polar residues. The segment covering 26–35 (EATAEEATAT) has biased composition (low complexity). Residues 73-360 (LQTEGELGHG…LKSLTADVFF (288 aa)) enclose the Protein kinase domain. ATP is bound by residues 79–87 (LGHGNGGVV) and K102. The Proton acceptor role is filled by D195. 2 positions are modified to phosphoserine: S223 and S227.

The protein belongs to the protein kinase superfamily. STE Ser/Thr protein kinase family. MAP kinase kinase subfamily. Interacts with ksr-1.

The enzyme catalyses L-seryl-[protein] + ATP = O-phospho-L-seryl-[protein] + ADP + H(+). It carries out the reaction L-threonyl-[protein] + ATP = O-phospho-L-threonyl-[protein] + ADP + H(+). The catalysed reaction is L-tyrosyl-[protein] + ATP = O-phospho-L-tyrosyl-[protein] + ADP + H(+). With respect to regulation, activated by tyrosine and threonine phosphorylation catalyzed by MAP kinase kinase kinases. Functions in the let-60 Ras signaling pathway; acts downstream of lin-45 raf kinase, but before the sur-1/mpk-1 gene product in controlling vulval cell differentiation. Required for progression of developing oocytes through the pachytene stage. Plays a role in responses to M.nematophilum-mediated bacterial infection by promoting tail swelling and preventing constipation. Involved in fluid homeostasis. Positively regulates lifespan upstream of mpk-1. This Caenorhabditis elegans protein is Dual specificity mitogen-activated protein kinase kinase mek-2 (mek-2).